A 129-amino-acid chain; its full sequence is Small ribosomal subunit protein uS8 (129 aa).

It belongs to the universal ribosomal protein uS8 family. Part of the 30S ribosomal subunit.

In terms of biological role, one of the primary rRNA binding proteins, it binds directly to 16S rRNA central domain where it helps coordinate assembly of the platform of the 30S subunit. This is Small ribosomal subunit protein uS8 from Picrophilus torridus (strain ATCC 700027 / DSM 9790 / JCM 10055 / NBRC 100828 / KAW 2/3).